A 452-amino-acid polypeptide reads, in one-letter code: Matrilin-3 (452 aa).

An N-terminal signal peptide occupies residues 1–24 (MRRALGTLGCCLALLLPLLPAARG). The region spanning 54–229 (DLVFIIDSSR…GVIEKLTSKF (176 aa)) is the VWFA domain. EGF-like domains follow at residues 235–275 (AANT…RTCS), 276–316 (AVDV…KTCS), 317–357 (AMDV…KTCS), and 358–398 (AVDV…KTCS). Disulfide bonds link Cys239–Cys250, Cys246–Cys259, Cys261–Cys274, Cys280–Cys291, Cys287–Cys300, Cys302–Cys315, Cys321–Cys332, Cys328–Cys341, Cys343–Cys356, Cys362–Cys373, Cys369–Cys382, and Cys384–Cys397. N-linked (GlcNAc...) asparagine glycosylation occurs at Asn295. Residues 419 to 451 (ALQDSVTSRLEALSTKLDEVSQKLQAYQDRQQV) are a coiled coil.

As to quaternary structure, can form homooligomers (monomers, dimers, trimers and tetramers) and heterooligomers with matrilin-1. In terms of tissue distribution, expression is restricted to cartilaginous tissues.

It localises to the secreted. Functionally, major component of the extracellular matrix of cartilage and may play a role in the formation of extracellular filamentous networks. In Gallus gallus (Chicken), this protein is Matrilin-3 (MATN3).